The sequence spans 478 residues: Cytochrome c-552 (478 aa).

The N-terminal stretch at Met1–Ala26 is a signal peptide. His94 lines the heme c pocket. Cys122, Cys125, and Lys126 together coordinate heme. Positions 160, 163, 164, 209, 212, and 213 each coordinate heme c. Ca(2+) contacts are provided by Glu215, Tyr216, Lys261, and Gln263. Tyr216 provides a ligand contact to substrate. Substrate is bound at residue His264. Heme c is bound by residues His275, Cys282, Cys285, His286, His301, Cys314, Cys317, His318, and His393.

Belongs to the cytochrome c-552 family. Requires Ca(2+) as cofactor. It depends on heme c as a cofactor.

It is found in the periplasm. It carries out the reaction 6 Fe(III)-[cytochrome c] + NH4(+) + 2 H2O = 6 Fe(II)-[cytochrome c] + nitrite + 8 H(+). Its pathway is nitrogen metabolism; nitrate reduction (assimilation). Functionally, catalyzes the reduction of nitrite to ammonia, consuming six electrons in the process. In Shigella flexneri, this protein is Cytochrome c-552.